Reading from the N-terminus, the 293-residue chain is 4-hydroxy-tetrahydrodipicolinate synthase (293 aa).

Pyruvate is bound at residue threonine 47. The Proton donor/acceptor role is filled by tyrosine 136. Residue lysine 164 is the Schiff-base intermediate with substrate of the active site. Isoleucine 206 contacts pyruvate.

The protein belongs to the DapA family. In terms of assembly, homotetramer; dimer of dimers.

The protein localises to the cytoplasm. The catalysed reaction is L-aspartate 4-semialdehyde + pyruvate = (2S,4S)-4-hydroxy-2,3,4,5-tetrahydrodipicolinate + H2O + H(+). Its pathway is amino-acid biosynthesis; L-lysine biosynthesis via DAP pathway; (S)-tetrahydrodipicolinate from L-aspartate: step 3/4. In terms of biological role, catalyzes the condensation of (S)-aspartate-beta-semialdehyde [(S)-ASA] and pyruvate to 4-hydroxy-tetrahydrodipicolinate (HTPA). This chain is 4-hydroxy-tetrahydrodipicolinate synthase, found in Listeria monocytogenes serotype 4a (strain HCC23).